The chain runs to 212 residues: ATP phosphoribosyltransferase (212 aa).

Belongs to the ATP phosphoribosyltransferase family. Short subfamily. Heteromultimer composed of HisG and HisZ subunits.

The protein localises to the cytoplasm. It carries out the reaction 1-(5-phospho-beta-D-ribosyl)-ATP + diphosphate = 5-phospho-alpha-D-ribose 1-diphosphate + ATP. It functions in the pathway amino-acid biosynthesis; L-histidine biosynthesis; L-histidine from 5-phospho-alpha-D-ribose 1-diphosphate: step 1/9. Its function is as follows. Catalyzes the condensation of ATP and 5-phosphoribose 1-diphosphate to form N'-(5'-phosphoribosyl)-ATP (PR-ATP). Has a crucial role in the pathway because the rate of histidine biosynthesis seems to be controlled primarily by regulation of HisG enzymatic activity. This Halalkalibacterium halodurans (strain ATCC BAA-125 / DSM 18197 / FERM 7344 / JCM 9153 / C-125) (Bacillus halodurans) protein is ATP phosphoribosyltransferase (hisG).